The primary structure comprises 145 residues: Mini-ribonuclease 3 (145 aa).

Residue D27 is part of the active site.

Belongs to the MrnC RNase family. As to quaternary structure, homodimer. Requires Mg(2+) as cofactor.

The protein resides in the cytoplasm. In terms of biological role, involved in correct processing of both the 5' and 3' ends of 23S rRNA precursor. Processes 30S rRNA precursor transcript even in absence of ribonuclease 3 (Rnc); Rnc processes 30S rRNA into smaller rRNA precursors. The chain is Mini-ribonuclease 3 from Kosmotoga olearia (strain ATCC BAA-1733 / DSM 21960 / TBF 19.5.1).